Consider the following 178-residue polypeptide: MGDPRRLGKKYDTPNHPWIGERIQSEREISQKYGLVNKKELWKMETQLRNYRRQARKLISDTTTQGGKEAVQLFNVLKRYAILVEQEPTLDHVLSLNIESILERRLQTMVYKKGLAKTAKQARQFIVHGHIAVNGKRVTSPSYLVSVAENDAIEYVPNSPMASENHPERTAAVSEENQ.

An S4 RNA-binding domain is found at 104 to 166; the sequence is RRLQTMVYKK…PNSPMASENH (63 aa). The interval 157 to 178 is disordered; that stretch reads PNSPMASENHPERTAAVSEENQ.

Belongs to the universal ribosomal protein uS4 family. In terms of assembly, part of the 30S ribosomal subunit. Contacts protein S5. The interaction surface between S4 and S5 is involved in control of translational fidelity.

One of the primary rRNA binding proteins, it binds directly to 16S rRNA where it nucleates assembly of the body of the 30S subunit. Its function is as follows. With S5 and S12 plays an important role in translational accuracy. This Methanococcus maripaludis (strain C7 / ATCC BAA-1331) protein is Small ribosomal subunit protein uS4.